The following is a 605-amino-acid chain: Aspartate--tRNA(Asp/Asn) ligase (605 aa).

Glu186 contacts L-aspartate. The interval 210–213 (QQFK) is aspartate. The L-aspartate site is built by Arg232 and His460. 232 to 234 (RDE) contributes to the ATP binding site. Residue Glu494 participates in ATP binding. Arg501 is an L-aspartate binding site. 546–549 (GLDR) is an ATP binding site.

It belongs to the class-II aminoacyl-tRNA synthetase family. Type 1 subfamily. Homodimer.

It is found in the cytoplasm. It catalyses the reaction tRNA(Asx) + L-aspartate + ATP = L-aspartyl-tRNA(Asx) + AMP + diphosphate. Functionally, aspartyl-tRNA synthetase with relaxed tRNA specificity since it is able to aspartylate not only its cognate tRNA(Asp) but also tRNA(Asn). Reaction proceeds in two steps: L-aspartate is first activated by ATP to form Asp-AMP and then transferred to the acceptor end of tRNA(Asp/Asn). The protein is Aspartate--tRNA(Asp/Asn) ligase of Chlorobium chlorochromatii (strain CaD3).